A 265-amino-acid chain; its full sequence is MSTLRLRGDLPERVDLLNITPLALSGLSEAEAGKLAIGTSRRGLTLGDVFEISLDGSDSLVIEGGSARLDRVGAALSQGSIRVEGDVGQRLGEGMAAGSLTVTGSAGPYAGTGATGGTITIEGDAGDHAGGAVYAAKAGLDGATLVIKGAAGDHLGDRMRRGMILAGSAGAFAASRMIAGTIVVSGALGDHPGYGMRRGTLIAGSHGTLLPTFVETGTPDLVFVRLLAQSLKHLGAAQASLLSGTLRRYSGDLATLGKGELFVPA.

This sequence belongs to the FwdC/FmdC family. As to quaternary structure, octaheteromer. Part of the formyltransferase/hydrolase complex fhc; composed of FhcA, FhcB, FhcC and FhcD.

The protein localises to the cytoplasm. The protein operates within one-carbon metabolism; formaldehyde degradation; formate from formaldehyde (H(4)MPT route): step 4/5. Functionally, involved in the transformation of 5-formyl tetrahydromethanopterin (5-formyl-H(4)MPT) to methanofuran (MFR) and formate via the formylmethanofuran (formyl-MFR). This Methylorubrum extorquens (strain ATCC 14718 / DSM 1338 / JCM 2805 / NCIMB 9133 / AM1) (Methylobacterium extorquens) protein is Formyltransferase/hydrolase complex Fhc subunit C (fhcC).